A 792-amino-acid polypeptide reads, in one-letter code: Cadherin-11 (792 aa).

Residues 1-22 form the signal peptide; the sequence is MKEDNCLHAALICLGMLYYSHA. Positions 23-53 are excised as a propeptide; it reads ITTEKLNHVRPSLHGHHEKGKEGQVLHRSKR. 5 consecutive Cadherin domains span residues 54–159, 160–268, 269–383, 384–486, and 487–608; these read GWVW…PPEF, LHEN…PPKF, PQSV…PPVF, LKPS…DNAP, and KFAA…YILN. Residues 54–613 lie on the Extracellular side of the membrane; that stretch reads GWVWNQFFVI…AYILNAGLST (560 aa). Asn455, Asn536, and Asn594 each carry an N-linked (GlcNAc...) asparagine glycan. A helical membrane pass occupies residues 614–634; that stretch reads GALIAILACIVILLVIVVLFV. Topologically, residues 635 to 792 are cytoplasmic; it reads TLKRQKKEPL…GSKDTFDDDS (158 aa).

The protein localises to the cell membrane. Functionally, cadherins are calcium-dependent cell adhesion proteins. They preferentially interact with themselves in a homophilic manner in connecting cells; cadherins may thus contribute to the sorting of heterogeneous cell types. Required for proper focal adhesion assembly. Involved in the regulation of cell migration. The protein is Cadherin-11 (CDH11) of Gallus gallus (Chicken).